A 417-amino-acid chain; its full sequence is Snake venom metalloproteinase kistomin (417 aa).

The N-terminal stretch at Met-1–Ser-20 is a signal peptide. A propeptide spanning residues Ile-21–Pro-189 is cleaved from the precursor. Positions Ala-197–Pro-391 constitute a Peptidase M12B domain. 3 cysteine pairs are disulfide-bonded: Cys-308–Cys-386, Cys-348–Cys-370, and Cys-350–Cys-353. Position 333 (His-333) interacts with Zn(2+). Glu-334 is an active-site residue. His-337 and His-343 together coordinate Zn(2+). Positions Leu-392–Ala-417 are excised as a propeptide.

This sequence belongs to the venom metalloproteinase (M12B) family. P-I subfamily. Monomer. The cofactor is Zn(2+). As to expression, expressed by the venom gland.

It is found in the secreted. Inhibited by EDTA, and O-phenanthrolene. In terms of biological role, snake venom zinc metalloprotease that inhibits platelet aggregation by binding specifically to platelet glycoprotein VI (GP6) and platelet glycoprotein Ib alpha (GP1BA). It inhibits the interaction between collagen and platelet GP6 by cleaving GP6 (at '225-Glu-|-Ala-226' and '238-Val-|-Phe-239' bonds), and inhibits vWF-induced platelet aggregation by cleaving GP1BA and vWF. Cleavage of GP1BA occurs at two distinct sites to generate two soluble fragments. It also cleaves alpha- (FGA) and subsequently the gamma-chain (FGG) of fibrinogen, leaving the beta-chain unaffected. It also inhibits collagen-, convulxin- and ristocetin-induced platelet aggregation. It blocks the adhesion of platelet to immobilized collagen, but only exerts a slight inhibition to fibrinogen. In vivo, it exerts potent antithrombotic effect. The protein is Snake venom metalloproteinase kistomin of Calloselasma rhodostoma (Malayan pit viper).